The sequence spans 60 residues: Large ribosomal subunit protein bL33 (60 aa).

It belongs to the bacterial ribosomal protein bL33 family.

In Cytophaga hutchinsonii (strain ATCC 33406 / DSM 1761 / CIP 103989 / NBRC 15051 / NCIMB 9469 / D465), this protein is Large ribosomal subunit protein bL33.